We begin with the raw amino-acid sequence, 353 residues long: MTITLGKSSKEEQTLFDTVDDWLRRDRFVFVGWSGLLLFPCAYFALGGWFTGTTFVTSWYTHGLASSYLEGCNFLTAAVSTPANSLAHSLLLLWGPEAQGDFTRWCQLGGLWTFVALHGAFGLIGFMLRQFELARSVQLRPYNAIAFSAPIAVFVSVFLIYPLGQSGWFFAPSFGVAAIFRFILFFQGFHNWTLNPFHMMGVAGVLGAALLCAIHGATVENTLFEDGDGANTFRAFNPTQAEETYSMVTANRFWSQIFGVAFSNKRWLHFFMLFVPVTGSWMSAIGVVGLALNLRAYDFVSQEIRAAEDPESETFYTKNILLNEGIRAWMAAQDQPHENLIFPEEVLPRGNAL.

T2 carries the N-acetylthreonine modification. Position 2 is a phosphothreonine (T2). Residues 41–61 (CAYFALGGWFTGTTFVTSWYT) traverse the membrane as a helical segment. H118 serves as a coordination point for chlorophyll a. The helical transmembrane segment at 125 to 141 (GFMLRQFELARSVQLRP) threads the bilayer. Residues Q130 and N143 each coordinate pheophytin a. The helical transmembrane segment at 153 to 166 (VFVSVFLIYPLGQS) threads the bilayer. H198 contacts chlorophyll a. Residues 208–228 (AALLCAIHGATVENTLFEDGD) form a helical membrane-spanning segment. A plastoquinone contacts are provided by H215 and F262. H215 provides a ligand contact to Fe cation. H269 contacts Fe cation. Residues 279-295 (GSWMSAIGVVGLALNLR) traverse the membrane as a helical segment.

It belongs to the reaction center PufL/M/PsbA/D family. As to quaternary structure, PSII is composed of 1 copy each of membrane proteins PsbA, PsbB, PsbC, PsbD, PsbE, PsbF, PsbH, PsbI, PsbJ, PsbK, PsbL, PsbM, PsbT, PsbX, PsbY, PsbZ, Psb30/Ycf12, at least 3 peripheral proteins of the oxygen-evolving complex and a large number of cofactors. It forms dimeric complexes. The D1/D2 heterodimer binds P680, chlorophylls that are the primary electron donor of PSII, and subsequent electron acceptors. It shares a non-heme iron and each subunit binds pheophytin, quinone, additional chlorophylls, carotenoids and lipids. There is also a Cl(-1) ion associated with D1 and D2, which is required for oxygen evolution. The PSII complex binds additional chlorophylls, carotenoids and specific lipids. is required as a cofactor.

The protein localises to the plastid. It is found in the chloroplast thylakoid membrane. The enzyme catalyses 2 a plastoquinone + 4 hnu + 2 H2O = 2 a plastoquinol + O2. Its function is as follows. Photosystem II (PSII) is a light-driven water:plastoquinone oxidoreductase that uses light energy to abstract electrons from H(2)O, generating O(2) and a proton gradient subsequently used for ATP formation. It consists of a core antenna complex that captures photons, and an electron transfer chain that converts photonic excitation into a charge separation. The D1/D2 (PsbA/PsbD) reaction center heterodimer binds P680, the primary electron donor of PSII as well as several subsequent electron acceptors. D2 is needed for assembly of a stable PSII complex. The chain is Photosystem II D2 protein from Pinus koraiensis (Korean pine).